A 363-amino-acid polypeptide reads, in one-letter code: Lipase (363 aa).

The signal sequence occupies residues 1-24 (MVLKQRANYLGFLIVFFTAFLVEA). Residues 25–94 (VPIKRQSNST…SYPDSVVQAM (70 aa)) constitute a propeptide that is removed on maturation. Residues 33–69 (STVDSLPPLIPSRTSAPSSSPSTTDPEAPAMSRNGPL) are disordered. The span at 43 to 62 (PSRTSAPSSSPSTTDPEAPA) shows a compositional bias: low complexity. 3 cysteine pairs are disulfide-bonded: Cys-123–Cys-362, Cys-134–Cys-137, and Cys-329–Cys-338. Ser-238 (nucleophile) is an active-site residue. Asp-297 (charge relay system) is an active-site residue. Asp-350 lines the Ca(2+) pocket. The active-site Charge relay system is the His-351.

This sequence belongs to the AB hydrolase superfamily. Lipase family.

It catalyses the reaction a triacylglycerol + H2O = a diacylglycerol + a fatty acid + H(+). This is Lipase from Rhizomucor miehei.